The chain runs to 657 residues: Tyrosine-protein phosphatase vhp-1 (657 aa).

The Rhodanese domain maps to 21 to 151 (APDTTLVVDC…FAQQYPQLCE (131 aa)). The region spanning 175–318 (GITLITPNIY…LLEYENVLIK (144 aa)) is the Tyrosine-protein phosphatase domain. Cysteine 262 acts as the Phosphocysteine intermediate in catalysis. 3 disordered regions span residues 353 to 426 (SNCV…MDLG), 539 to 563 (VPAGSSSISTPSGSQSTPASASSSA), and 581 to 657 (PAST…PCHQ). The segment covering 366-405 (SPSSPSVSEGSAASEPETSSSAASSSSTASAPPSMPSTSE) has biased composition (low complexity). Over residues 406–419 (QGTSSGTVNVNGKR) the composition is skewed to polar residues. Low complexity-rich tracts occupy residues 542–563 (GSSSISTPSGSQSTPASASSSA) and 581–597 (PASTSTPASSTPGTSRA).

It belongs to the protein-tyrosine phosphatase family. Non-receptor class dual specificity subfamily. In terms of assembly, may interact with pmk-3. As to expression, expressed in the pharynx, intestine, neurons and vulval hypodermal cells.

It catalyses the reaction O-phospho-L-tyrosyl-[protein] + H2O = L-tyrosyl-[protein] + phosphate. In terms of biological role, acts preferentially on the c-Jun N-terminal kinase (JNK) and p38 MAPKs. Plays an important role in the heavy metal stress response and in axon regeneration by negatively regulating the kgb-1 (JNK-like) and the pmk-1 (p38-type) MAPK signaling pathways. The polypeptide is Tyrosine-protein phosphatase vhp-1 (vhp-1) (Caenorhabditis elegans).